A 644-amino-acid polypeptide reads, in one-letter code: Exoribonuclease 2 (644 aa).

An RNB domain is found at 189–516; the sequence is REDLTALNFV…NHRLLKAMIT (328 aa). The 83-residue stretch at 561–643 folds into the S1 motif domain; that stretch reads DTRFTAEIID…ETRNVIARPV (83 aa).

This sequence belongs to the RNR ribonuclease family. RNase II subfamily.

It localises to the cytoplasm. It catalyses the reaction Exonucleolytic cleavage in the 3'- to 5'-direction to yield nucleoside 5'-phosphates.. In terms of biological role, involved in mRNA degradation. Hydrolyzes single-stranded polyribonucleotides processively in the 3' to 5' direction. The protein is Exoribonuclease 2 of Yersinia pseudotuberculosis serotype IB (strain PB1/+).